We begin with the raw amino-acid sequence, 348 residues long: Holliday junction branch migration complex subunit RuvB (348 aa).

The tract at residues 3–183 (DDGLVSAAAS…FGFTAHLDFY (181 aa)) is large ATPase domain (RuvB-L). Residues Leu-22, Arg-23, Gly-64, Lys-67, Thr-68, Ser-69, 130–132 (EDF), Arg-173, Tyr-183, and Arg-220 each bind ATP. Thr-68 contributes to the Mg(2+) binding site. Residues 184 to 254 (DADELARVLT…IAQAALRIYD (71 aa)) are small ATPAse domain (RuvB-S). Residues 257-348 (GLGLDRLDRA…TQVSLFTEGE (92 aa)) are head domain (RuvB-H). DNA is bound by residues Arg-312 and Arg-317.

It belongs to the RuvB family. As to quaternary structure, homohexamer. Forms an RuvA(8)-RuvB(12)-Holliday junction (HJ) complex. HJ DNA is sandwiched between 2 RuvA tetramers; dsDNA enters through RuvA and exits via RuvB. An RuvB hexamer assembles on each DNA strand where it exits the tetramer. Each RuvB hexamer is contacted by two RuvA subunits (via domain III) on 2 adjacent RuvB subunits; this complex drives branch migration. In the full resolvosome a probable DNA-RuvA(4)-RuvB(12)-RuvC(2) complex forms which resolves the HJ.

It localises to the cytoplasm. The enzyme catalyses ATP + H2O = ADP + phosphate + H(+). Its function is as follows. The RuvA-RuvB-RuvC complex processes Holliday junction (HJ) DNA during genetic recombination and DNA repair, while the RuvA-RuvB complex plays an important role in the rescue of blocked DNA replication forks via replication fork reversal (RFR). RuvA specifically binds to HJ cruciform DNA, conferring on it an open structure. The RuvB hexamer acts as an ATP-dependent pump, pulling dsDNA into and through the RuvAB complex. RuvB forms 2 homohexamers on either side of HJ DNA bound by 1 or 2 RuvA tetramers; 4 subunits per hexamer contact DNA at a time. Coordinated motions by a converter formed by DNA-disengaged RuvB subunits stimulates ATP hydrolysis and nucleotide exchange. Immobilization of the converter enables RuvB to convert the ATP-contained energy into a lever motion, pulling 2 nucleotides of DNA out of the RuvA tetramer per ATP hydrolyzed, thus driving DNA branch migration. The RuvB motors rotate together with the DNA substrate, which together with the progressing nucleotide cycle form the mechanistic basis for DNA recombination by continuous HJ branch migration. Branch migration allows RuvC to scan DNA until it finds its consensus sequence, where it cleaves and resolves cruciform DNA. The polypeptide is Holliday junction branch migration complex subunit RuvB (Frankia casuarinae (strain DSM 45818 / CECT 9043 / HFP020203 / CcI3)).